The chain runs to 87 residues: Small ribosomal subunit protein uS17 (87 aa).

Belongs to the universal ribosomal protein uS17 family. As to quaternary structure, part of the 30S ribosomal subunit.

Functionally, one of the primary rRNA binding proteins, it binds specifically to the 5'-end of 16S ribosomal RNA. The sequence is that of Small ribosomal subunit protein uS17 from Thiobacillus denitrificans (strain ATCC 25259 / T1).